We begin with the raw amino-acid sequence, 75 residues long: Cytochrome c oxidase subunit 6C (75 aa).

Residues 1 to 13 (MAPEVLPKPRMRG) lie on the Mitochondrial matrix side of the membrane. The chain crosses the membrane as a helical span at residues 14 to 54 (LLARRLRNHMAVAFVLSLGVAALYKFRVADQRKKAYADFYR). At 55 to 75 (NYDVMKDFEEMRKAGIFQSVK) the chain is on the mitochondrial intermembrane side.

It belongs to the cytochrome c oxidase subunit 6c family. Component of the cytochrome c oxidase (complex IV, CIV), a multisubunit enzyme composed of 14 subunits. The complex is composed of a catalytic core of 3 subunits MT-CO1, MT-CO2 and MT-CO3, encoded in the mitochondrial DNA, and 11 supernumerary subunits COX4I1 (or COX4I2), COX5A, COX5B, COX6A1 (or COX6A2), COX6B1 (or COX6B2), COX6C, COX7A2 (or COX7A1), COX7B, COX7C, COX8A and NDUFA4, which are encoded in the nuclear genome. The complex exists as a monomer or a dimer and forms supercomplexes (SCs) in the inner mitochondrial membrane with NADH-ubiquinone oxidoreductase (complex I, CI) and ubiquinol-cytochrome c oxidoreductase (cytochrome b-c1 complex, complex III, CIII), resulting in different assemblies (supercomplex SCI(1)III(2)IV(1) and megacomplex MCI(2)III(2)IV(2)).

The protein localises to the mitochondrion inner membrane. Its pathway is energy metabolism; oxidative phosphorylation. In terms of biological role, component of the cytochrome c oxidase, the last enzyme in the mitochondrial electron transport chain which drives oxidative phosphorylation. The respiratory chain contains 3 multisubunit complexes succinate dehydrogenase (complex II, CII), ubiquinol-cytochrome c oxidoreductase (cytochrome b-c1 complex, complex III, CIII) and cytochrome c oxidase (complex IV, CIV), that cooperate to transfer electrons derived from NADH and succinate to molecular oxygen, creating an electrochemical gradient over the inner membrane that drives transmembrane transport and the ATP synthase. Cytochrome c oxidase is the component of the respiratory chain that catalyzes the reduction of oxygen to water. Electrons originating from reduced cytochrome c in the intermembrane space (IMS) are transferred via the dinuclear copper A center (CU(A)) of subunit 2 and heme A of subunit 1 to the active site in subunit 1, a binuclear center (BNC) formed by heme A3 and copper B (CU(B)). The BNC reduces molecular oxygen to 2 water molecules using 4 electrons from cytochrome c in the IMS and 4 protons from the mitochondrial matrix. This is Cytochrome c oxidase subunit 6C (COX6C) from Homo sapiens (Human).